Here is a 966-residue protein sequence, read N- to C-terminus: Polycystin-2 (966 aa).

The disordered stretch occupies residues 1 to 106 (MVNSRRVQPQ…DDDEVEGEEG (106 aa)). Topologically, residues 1–217 (MVNSRRVQPQ…NANREKYLKS (217 aa)) are cytoplasmic. Over residues 30–44 (VAGGAGLAVPGGLGE) the composition is skewed to gly residues. Basic and acidic residues predominate over residues 46-56 (RGLEIEMERIR). Residues 58 to 79 (AAARDPPAGASASPSPPLSSCS) show a composition bias toward low complexity. Phosphoserine is present on residues S72 and S76. The span at 91-105 (EAEEDDDDDEVEGEE) shows a compositional bias: acidic residues. R135 carries the omega-N-methylarginine modification. The interval 147-179 (HLSGRRRRLEDQGAQCPSPAGGGDPLHRHLPLE) is disordered. A helical membrane pass occupies residues 218 to 239 (VLRELVTYLFFLVVLCILTYGM). The Extracellular segment spans residues 240 to 466 (MSSNVYYYTR…PVKLIRYVTA (227 aa)). N297, N303, and N326 each carry an N-linked (GlcNAc...) asparagine glycan. A disulfide bond links C329 and C342. N-linked (GlcNAc...) asparagine glycans are attached at residues N360 and N373. A helical membrane pass occupies residues 467-487 (FDFFLAACEIIFCFFIIYYVV). Over 488–503 (EEILEIRIHRLSYFRS) the chain is Cytoplasmic. Residues 504-524 (FWNCLDVVIVVLSVVAMVINI) form a helical membrane-spanning segment. The Extracellular segment spans residues 525 to 550 (YRMSNAEGLLQFLEDQNSFPNFEHVA). The helical transmembrane segment at 551-571 (YWQIQFNNISAVMVFLVWIKL) threads the bilayer. Q555 contacts cholesterol. Topologically, residues 572–595 (FKFINFNRTMSQLSTTMSRCAKDL) are cytoplasmic. The helical transmembrane segment at 596–617 (FGFTIMFSIIFLAYAQLAYLVF) threads the bilayer. Residues 618 to 629 (GTQVDDFSTFQE) lie on the Extracellular side of the membrane. The pore-forming intramembrane region spans 630–644 (CIFTQFRIILGDINF). A Ca(2+)-binding site is contributed by L639. Positions 639 to 641 (LGD) match the Selectivity filter motif. The Extracellular segment spans residues 645–652 (AEIEEANR). A helical transmembrane segment spans residues 653-673 (VLGPLYFTTFVFFMFFILLNM). Over 674–966 (FLAIINDSYS…GGNGSANVHA (293 aa)) the chain is Cytoplasmic. One can recognise an EF-hand domain in the interval 748 to 783 (HTDAEIEAIFTKYDQDGDQELTEREHQQMRDDLEKE). Ca(2+) is bound by residues D761, D763, D765, E767, and E772. The segment at 764-828 (GDQELTEREH…GHSSRRRGSI (65 aa)) is disordered. A compositionally biased stretch (basic and acidic residues) spans 768–793 (LTEREHQQMRDDLEKEREDLDLEHSS). Low complexity predominate over residues 794–805 (LPRPMSSRSFPR). Residues S799, S806, S810, and S827 each carry the phosphoserine modification. Residues 801 to 820 (RSFPRSLDDSEEEDDEDSGH) are linker. An important for interaction with PACS1 and PACS2 region spans residues 808–819 (DDSEEEDDEDSG). The stretch at 831–870 (GVSYEEFQVLVRRVDRMEHSIGSIVSKIDAVIVKLEIMER) forms a coiled coil. The disordered stretch occupies residues 914 to 966 (WESDDAASQTGHGVSTQVGLGGQPHPRNPRPPSSQSAEGLEGGGGNGSANVHA). Positions 919–931 (AASQTGHGVSTQV) are enriched in polar residues.

Belongs to the polycystin family. As to quaternary structure, homotetramer. Component of the heterotetrameric polycystin channel complex with PKD1; the tetramer contains one PKD1 chain and three PKD2 chains. Interaction with PKD1 is required for ciliary localization. Isoform 1 interacts with PKD1 while isoform 3 does not. Interacts with PKD1L1. Interacts with CD2AP. Interacts with HAX1. Interacts with NEK8. Part of a complex containing AKAP5, ADCY5, ADCY6 and PDE4C. Interacts (via C-terminus) with TRPV4 (via C-terminus). Interacts (via C-terminal acidic region) with PACS1 and PACS2; these interactions retain the protein in the endoplasmic reticulum and prevent trafficking to the cell membrane. Interacts with TMEM33; enhancing its opening at the ER membrane. Interacts with TMEM120A; TMEM120A inhibits PKD2 channel activity through the physical association of PKD2 with TMEM120A. Interacts (via N-terminus) with RYR2; regulates RYR2 channel activity. In terms of processing, N-glycosylated. The four subunits in a tetramer probably differ in the extent of glycosylation; simultaneous glycosylation of all experimentally validated sites would probably create steric hindrance. Post-translationally, sumoylated by SUMO1; sumoylation regulates PKD2 membrane recycling and is necessary for intravascular pressure-induced arterial contractility. Phosphorylated. Phosphorylation is important for protein function; a mutant that lacks the N-terminal phosphorylation sites cannot complement a zebrafish pkd2-deficient mutant. PKD-mediated phosphorylation at the C-terminus regulates its function in the release of Ca(2+) stores from the endoplasmic reticulum. Phosphorylation at Ser-810 regulates PKD2 trafficking. Phosphorylation at Ser-72 is required for PKD2 trafficking to or retention at the lateral plasma membrane. Phosphorylation at Ser-799, Ser-810 and Ser-827 regulates PKD2 channel activity. Detected in kidney epithelium (at protein level). Highly expressed on basolateral membranes in distal convoluted tubules and medullary thick ascending limbs of Henle. Detected at much lower levels in cortical and medullary collecting tubules, and not detected in the glomerular tuft, in thin limbs of Henle, interstitium and blood vessels (at protein level). Expressed in mesenchymally derived structures in the developing embryo at day 12.5. Isoform 1 is predominantly expressed in kidney at all developmental stages with high levels also detected in lung. Isoform 3 shows highest expression in brain with lower expression in kidney and lung, low levels in thymus and is hardly detectable in liver.

Its subcellular location is the cell projection. It is found in the cilium membrane. The protein localises to the cell membrane. The protein resides in the basolateral cell membrane. It localises to the cytoplasmic vesicle membrane. Its subcellular location is the endoplasmic reticulum membrane. It is found in the golgi apparatus. The protein localises to the vesicle. The protein resides in the secreted. It localises to the extracellular exosome. It carries out the reaction K(+)(in) = K(+)(out). The enzyme catalyses Na(+)(in) = Na(+)(out). It catalyses the reaction Ca(2+)(in) = Ca(2+)(out). Its activity is regulated as follows. Channel activity is regulated by phosphorylation. The channel is activated by increased cytoplasmic Ca(2+) (in the uM range) and by membrane depolarization. TMEM120A inhibits the channel activity of PKD2, and mediates mechanosensitivity of the PKD2-TMEM120A channel complex. At the endoplasmic reticulum membrane (ER), TMEM33 enhances its channel activity. PKD1/ PKD2 complex on the plasma membrane is activated by PKD1 N-terminus. Its function is as follows. Forms a nonselective cation channel. Can function as a homotetrameric ion channel or can form heteromer with PKD1. Displays distinct function depending on its subcellular localization and regulation by its binding partners. Functions as a cation channel, with a preference for monovalent cations over divalent cations that allows K(+), Na(+) and Ca(2+) influx, with low selectivity for Ca(2+). Involved in fluid-flow mechanosensation by the primary cilium in renal epithelium. In the endoplasmic reticulum, likely functions as a K(+) channel to facilitate Ca(2+) release. The heterotetrameric PKD1/PKD2 channel has higher Ca(2+) permeability than homomeric PKD2 channel and acts as a primarily Ca(2+)-permeable channel. PKD1 and PKD2 may function through a common signaling pathway that is necessary to maintain the normal, differentiated state of renal tubule cells. Interacts with and acts as a regulator of a number of other channels, such as TRPV4, TRPC1, IP3R, RYR2, ultimately further affecting intracellular signaling, to modulate intracellular Ca(2+) signaling. Together with TRPV4, forms mechano- and thermosensitive channels in cilium. In cardiomyocytes, PKD2 modulates Ca(2+) release from stimulated RYR2 receptors through direct association. Also involved in left-right axis specification via its role in sensing nodal flow; forms a complex with PKD1L1 in cilia to facilitate flow detection in left-right patterning. Acts as a regulator of cilium length together with PKD1. Mediates systemic blood pressure and contributes to the myogenic response in cerebral arteries though vasoconstriction. This chain is Polycystin-2, found in Mus musculus (Mouse).